We begin with the raw amino-acid sequence, 162 residues long: Probable tRNA (guanine(10)-N2)-dimethyltransferase (162 aa).

The protein belongs to the methyltransferase superfamily. Trm-G10 family. In terms of assembly, monomer.

It is found in the cytoplasm. It catalyses the reaction guanosine(10) in tRNA + 2 S-adenosyl-L-methionine = N(2)-dimethylguanosine(10) in tRNA + 2 S-adenosyl-L-homocysteine + 2 H(+). Its function is as follows. Catalyzes the adenosylmethionine-dependent methylation of the exocyclic amino group (N(2)) of guanosine at position 10 of various tRNAs. Acts via a two-step process that leads to the formation of either N(2)-monomethyl (m(2)G) or N(2)-dimethylguanosine (m(2)(2)G). This chain is Probable tRNA (guanine(10)-N2)-dimethyltransferase (trmG10), found in Methanothermococcus thermolithotrophicus (Methanococcus thermolithotrophicus).